Here is a 1910-residue protein sequence, read N- to C-terminus: Endoribonuclease dcr-1 (1910 aa).

One can recognise a Helicase ATP-binding domain in the interval 20 to 201 (LLDKATKKNT…KLMEQLKKLE (182 aa)). ATP is bound at residue 33 to 40 (LGTGSGKT). The DEAH box motif lies at 145 to 148 (DECH). The region spanning 371-542 (EFQKERMKLE…TVNNPIEDDS (172 aa)) is the Helicase C-terminal domain. The region spanning 571–667 (AIALINRYCS…LPKGRESIAK (97 aa)) is the Dicer dsRNA-binding fold domain. Residues 845 to 1003 (YVSEVVANME…LVPELMDIHP (159 aa)) form the PAZ domain. Disordered regions lie at residues 951–988 (RIQN…VPHS), 1227–1248 (TASS…KQLT), and 1272–1309 (LEMS…PTNF). Composition is skewed to polar residues over residues 970–988 (IPQA…VPHS) and 1227–1245 (TASS…SPPK). Residues 1245 to 1280 (KQLTKEEEQFKKLQNDLLKQAKERLEALEMSEDMEK) adopt a coiled-coil conformation. The segment covering 1272-1286 (LEMSEDMEKPRRLED) has biased composition (basic and acidic residues). Acidic residues predominate over residues 1288 to 1304 (VNLEDYGDDQENQEDEN). 2 consecutive RNase III domains span residues 1381–1589 (VSHI…LTLG) and 1643–1805 (FTQL…LDSG). Positions 1682, 1791, and 1794 each coordinate Mg(2+). A DRBM domain is found at 1833–1896 (SPIRELMEFE…AKRALKYLHQ (64 aa)).

The protein belongs to the helicase family. Dicer subfamily. As to quaternary structure, component of the ERI/DICER complex at least composed of dcr-1, rrf-3 and eri-1. Interacts with pir-1. It depends on Mg(2+) as a cofactor. The cofactor is Mn(2+).

Component of the ERI/DICER complex which is involved in processing amplified double-stranded RNA (dsRNA) intermediates during small-RNA-mediated gene-silencing or RNA interference (RNAi). Involved in cleaving dsRNA in the RNAi pathway. It produces 21 to 23 bp dsRNAs (siRNAs) which target the selective destruction of homologous RNAs. Seems to process the precursor of the small temporal RNA let-7 which is involved in developmental timing. Required for avoidance behavior induced by small RNAs derived from pathogenic bacteria such as P.aeruginosa. Involved in innate immunity through its role in small RNA processing. Its function is as follows. tDCR-1 acts as a deoxyribonuclease (DNase) initiating DNA fragmentation during apoptosis, upstream of nucleases cps-6, crn-2 and nuc-1. The protein is Endoribonuclease dcr-1 of Caenorhabditis elegans.